The chain runs to 337 residues: GDP-mannose transporter 1 (337 aa).

At 1-16 the chain is on the cytoplasmic side; the sequence is MSELKTGHAGHNPWAS. The chain crosses the membrane as a helical span at residues 17–37; the sequence is VANSGPISILSYCGSSILMTV. Over 38–51 the chain is Lumenal; sequence TNKFVVNLKDFNMN. A helical transmembrane segment spans residues 52-72; the sequence is FVMLFVQSLVCTITLIILRIL. Over 73–92 the chain is Cytoplasmic; that stretch reads GYAKFRSLNKTDAKNWFPIS. Residues 93–113 form a helical membrane-spanning segment; the sequence is FLLVLMIYTSSKALQYLAVPI. The Lumenal segment spans residues 114 to 119; it reads YTIFKN. The N-linked (GlcNAc...) asparagine glycan is linked to Asn119. A helical transmembrane segment spans residues 120–140; it reads LTIILIAYGEVLFFGGSVTSM. The Cytoplasmic portion of the chain corresponds to 141–144; sequence ELSS. The helical transmembrane segment at 145-165 threads the bilayer; that stretch reads FLLMVLSSVVATWGDQQAVAA. Over 166 to 180 the chain is Lumenal; it reads KAASLAEGAAGAVAS. Residues 181-201 form a helical membrane-spanning segment; it reads FNPGYFWMFTNCITSALFVLI. Residues 202–215 lie on the Cytoplasmic side of the membrane; the sequence is MRKRIKLTNFKDFD. A helical transmembrane segment spans residues 216-236; sequence TMFYNNVLALPILLLFSFCVE. The Lumenal portion of the chain corresponds to 237–252; it reads DWSSVNLTNNFSNDSL. Asn242, Asn246, and Asn249 each carry an N-linked (GlcNAc...) asparagine glycan. A helical transmembrane segment spans residues 253 to 273; sequence TAMIISGVASVGISYCSGWCV. Residues 274–279 lie on the Cytoplasmic side of the membrane; that stretch reads RVTSST. The chain crosses the membrane as a helical span at residues 280–300; the sequence is TYSMVGALNKLPIALSGLIFF. Residues 301-304 are Lumenal-facing; the sequence is DAPR. The helical transmembrane segment at 305-325 threads the bilayer; the sequence is NFLSILSIFIGFLSGIIYAVA. Residues 326-337 lie on the Cytoplasmic side of the membrane; the sequence is KQKKQQAQPLRK.

It belongs to the TPT transporter family. SLC35D subfamily. As to quaternary structure, homooligomer.

It localises to the golgi apparatus membrane. Its subcellular location is the cytoplasmic vesicle membrane. It is found in the endoplasmic reticulum membrane. Its function is as follows. Involved in the import of GDP-mannose from the cytoplasm into the Golgi lumen. Defective copy causes severe glycosylation defect and abnormal retention of soluble endoplasmic reticulum proteins. Involved in vanadate sensitivity. This is GDP-mannose transporter 1 (VRG4) from Saccharomyces cerevisiae (strain YJM789) (Baker's yeast).